Consider the following 171-residue polypeptide: 6,7-dimethyl-8-ribityllumazine synthase (171 aa).

Residues F24, 58–60 (ALE), and 82–84 (AVI) each bind 5-amino-6-(D-ribitylamino)uracil. Residue 87 to 88 (ET) coordinates (2S)-2-hydroxy-3-oxobutyl phosphate. The active-site Proton donor is the H90. Position 115 (N115) interacts with 5-amino-6-(D-ribitylamino)uracil. Residue R129 coordinates (2S)-2-hydroxy-3-oxobutyl phosphate. Residues 150 to 171 (ALDQLGDDEDEEEDEEDEEERA) are disordered. Residues 154–171 (LGDDEDEEEDEEDEEERA) are compositionally biased toward acidic residues.

The protein belongs to the DMRL synthase family.

It catalyses the reaction (2S)-2-hydroxy-3-oxobutyl phosphate + 5-amino-6-(D-ribitylamino)uracil = 6,7-dimethyl-8-(1-D-ribityl)lumazine + phosphate + 2 H2O + H(+). Its pathway is cofactor biosynthesis; riboflavin biosynthesis; riboflavin from 2-hydroxy-3-oxobutyl phosphate and 5-amino-6-(D-ribitylamino)uracil: step 1/2. Catalyzes the formation of 6,7-dimethyl-8-ribityllumazine by condensation of 5-amino-6-(D-ribitylamino)uracil with 3,4-dihydroxy-2-butanone 4-phosphate. This is the penultimate step in the biosynthesis of riboflavin. This chain is 6,7-dimethyl-8-ribityllumazine synthase, found in Burkholderia ambifaria (strain MC40-6).